Here is a 595-residue protein sequence, read N- to C-terminus: Potassium-transporting ATPase potassium-binding subunit (595 aa).

The next 10 helical transmembrane spans lie at 9–29 (ICGYLGVLLALAKPLGSYMAA), 63–83 (TGYASAFLVFNLLGVLAVYAL), 135–155 (GLTVQNFVSAASGMAVLVALI), 177–197 (ILHILLPLSFLLALLLIGQGV), 285–305 (FLEMLAILVISGALCHTFGVM), 312–332 (GWVILAAMTLIFVPLLFVTVL), 412–432 (GLYGMLVFAIVAVFVAGLMIG), 451–471 (AIVILVPPLMVLGGTAVAVML), 516–536 (LMLGLAMWFSRYWLAVPVLAI), and 560–580 (FVGLLVGVVIIVGALTFIPAL).

The protein belongs to the KdpA family. As to quaternary structure, the system is composed of three essential subunits: KdpA, KdpB and KdpC.

It is found in the cell inner membrane. Part of the high-affinity ATP-driven potassium transport (or Kdp) system, which catalyzes the hydrolysis of ATP coupled with the electrogenic transport of potassium into the cytoplasm. This subunit binds the periplasmic potassium ions and delivers the ions to the membrane domain of KdpB through an intramembrane tunnel. The sequence is that of Potassium-transporting ATPase potassium-binding subunit from Methylococcus capsulatus (strain ATCC 33009 / NCIMB 11132 / Bath).